The primary structure comprises 326 residues: Undecaprenyl-phosphate 4-deoxy-4-formamido-L-arabinose transferase (326 aa).

Topologically, residues 1–235 (MFEIHPIKKV…TCLTTTPLRM (235 aa)) are cytoplasmic. The helical transmembrane segment at 236–256 (LSLLGSIIATSGFSLAILLVV) threads the bilayer. Residues 257-269 (LRLAFGSQWSGEG) are Periplasmic-facing. Residues 270–290 (VFMLFAVLFTFIGAQFIGMGL) traverse the membrane as a helical segment. The Cytoplasmic portion of the chain corresponds to 291 to 326 (LGEYIGRIYNDVRARPRYFVQKVIRPASSIDIEENH).

It belongs to the glycosyltransferase 2 family.

The protein resides in the cell inner membrane. The catalysed reaction is UDP-4-deoxy-4-formamido-beta-L-arabinose + di-trans,octa-cis-undecaprenyl phosphate = 4-deoxy-4-formamido-alpha-L-arabinopyranosyl di-trans,octa-cis-undecaprenyl phosphate + UDP. It functions in the pathway glycolipid biosynthesis; 4-amino-4-deoxy-alpha-L-arabinose undecaprenyl phosphate biosynthesis; 4-amino-4-deoxy-alpha-L-arabinose undecaprenyl phosphate from UDP-4-deoxy-4-formamido-beta-L-arabinose and undecaprenyl phosphate: step 1/2. It participates in bacterial outer membrane biogenesis; lipopolysaccharide biosynthesis. In terms of biological role, catalyzes the transfer of 4-deoxy-4-formamido-L-arabinose from UDP to undecaprenyl phosphate. The modified arabinose is attached to lipid A and is required for resistance to polymyxin and cationic antimicrobial peptides. In Escherichia fergusonii (strain ATCC 35469 / DSM 13698 / CCUG 18766 / IAM 14443 / JCM 21226 / LMG 7866 / NBRC 102419 / NCTC 12128 / CDC 0568-73), this protein is Undecaprenyl-phosphate 4-deoxy-4-formamido-L-arabinose transferase.